A 757-amino-acid polypeptide reads, in one-letter code: Probable phospholipase C20G8.02, mitochondrial (757 aa).

Residues 1–13 (MILYIVLPFYVRT) constitute a mitochondrion transit peptide. Residues 289-330 (ESNSKPSTPVPTEELTSTTLLNDSSDPSDNFTPSNTESTIDL) are disordered. Residues 302-329 (ELTSTTLLNDSSDPSDNFTPSNTESTID) show a composition bias toward polar residues. Serine 524 is a catalytic residue. The 211-residue stretch at 547–757 (LDFPVANFFA…LAHFILTQLL (211 aa)) folds into the DDHD domain.

Belongs to the PA-PLA1 family.

Its subcellular location is the mitochondrion. Probable phospholipase that hydrolyzes phosphatidic acid. In Schizosaccharomyces pombe (strain 972 / ATCC 24843) (Fission yeast), this protein is Probable phospholipase C20G8.02, mitochondrial.